An 84-amino-acid polypeptide reads, in one-letter code: Small ribosomal subunit protein bS16 (84 aa).

Belongs to the bacterial ribosomal protein bS16 family.

The protein is Small ribosomal subunit protein bS16 of Ralstonia pickettii (strain 12J).